Here is a 617-residue protein sequence, read N- to C-terminus: Secretogranin-2 (617 aa).

A signal peptide spans 1–27 (MAEAKTHWLGAALSLIPLIFLISGAEA). The propeptide occupies 28–30 (ASF). Residues 123 to 147 (NEPQSVPKENKPHALNSEKNFPIDM) form a disordered region. Tyrosine 151 carries the post-translational modification Sulfotyrosine. 6 positions are modified to phosphoserine: serine 174, serine 268, serine 432, serine 532, serine 555, and serine 556. Positions 552 to 583 (NQGSSQETDKLAPVSKRFPVGPPKNDDTPNRQ) are disordered.

Belongs to the chromogranin/secretogranin protein family. As to quaternary structure, interacts with Secretogranin III/SCG3.

The protein localises to the secreted. Neuroendocrine protein of the granin family that regulates the biogenesis of secretory granules. This chain is Secretogranin-2 (SCG2), found in Macaca fascicularis (Crab-eating macaque).